The primary structure comprises 271 residues: Ferric enterobactin transport ATP-binding protein FepC (271 aa).

The ABC transporter domain maps to 8 to 244 (LRGEQLTLGY…ELIERIYGLR (237 aa)). Residue 40 to 47 (GPNGCGKS) participates in ATP binding.

This sequence belongs to the ABC transporter superfamily. In terms of assembly, the complex is composed of two ATP-binding proteins (FepC), two transmembrane proteins (FepD and FepG) and a solute-binding protein (FepB).

It is found in the cell inner membrane. It catalyses the reaction Fe(III)-enterobactin(out) + ATP + H2O = Fe(III)-enterobactin(in) + ADP + phosphate + H(+). Part of the ABC transporter complex FepBDGC involved in ferric enterobactin uptake. Responsible for energy coupling to the transport system. This chain is Ferric enterobactin transport ATP-binding protein FepC (fepC), found in Escherichia coli (strain K12).